The chain runs to 423 residues: Cytochrome b mRNA maturase bI2 (423 aa).

The Mitochondrial matrix segment spans residues 1-31 (MAFRKSNVYLSLVNSYIIDSPQPSSINYWWN). The tract at residues 1–143 (MAFRKSNVYL…CVYGQMSHWG (143 aa)) is cytochrome b. The helical transmembrane segment at 32 to 52 (MGSLLGLCLVIQIVTGIFMAM) threads the bilayer. The Mitochondrial intermembrane portion of the chain corresponds to 53–84 (HYSSNIELAFSSVEHIMRDVHNGYILRYLHAN). Residues 85 to 105 (GASFFFMVMFMHMAKGLYYGS) traverse the membrane as a helical segment. Topologically, residues 106–115 (YRSPRVTLWN) are mitochondrial matrix. A helical membrane pass occupies residues 116–136 (VGVIIFILTIATAFLGYCCVY). The Mitochondrial intermembrane segment spans residues 137–153 (GQMSHWGNMNIASNMFN). The segment at 144–423 (NMNIASNMFN…SMKYKLGNYL (280 aa)) is maturase. A helical transmembrane segment spans residues 154–174 (MMKTIYMMMLMLLIYIFYTIM). Residues 175-423 (MRQMMKTKEY…SMKYKLGNYL (249 aa)) are Mitochondrial matrix-facing.

In the N-terminal section; belongs to the cytochrome b family. This sequence in the C-terminal section; belongs to the LAGLIDADG endonuclease family.

The protein localises to the mitochondrion inner membrane. In terms of biological role, this protein is responsible for splicing and maturation of cytochrome b mRNA. Specifically, it may be responsible for the splicing specificity of the second intron. The protein is Cytochrome b mRNA maturase bI2 (BI2) of Saccharomyces cerevisiae (strain ATCC 204508 / S288c) (Baker's yeast).